Reading from the N-terminus, the 368-residue chain is Probable endopolygalacturonase A (368 aa).

The first 18 residues, 1–18 (MRSVELLSLAALGSLVAA), serve as a signal peptide directing secretion. Positions 19-31 (APAPSRVSDLTKR) are excised as a propeptide. Residues Cys-35 and Cys-50 are joined by a disulfide bond. PbH1 repeat units lie at residues 140–162 (LEDS…SVQA), 167–192 (LIDI…DISE), 193–214 (STGV…AINS), 215–235 (GENI…SIGS), 244–265 (VKNV…RIKT), 273–295 (VSEV…VIEQ), and 307–352 (TTGV…DITG). Asp-207 acts as the Proton donor in catalysis. A disulfide bridge connects residues Cys-209 and Cys-225. His-229 is a catalytic residue. Asn-246 carries N-linked (GlcNAc...) asparagine glycosylation. Intrachain disulfides connect Cys-335–Cys-340 and Cys-359–Cys-368.

It belongs to the glycosyl hydrolase 28 family.

It localises to the secreted. The catalysed reaction is (1,4-alpha-D-galacturonosyl)n+m + H2O = (1,4-alpha-D-galacturonosyl)n + (1,4-alpha-D-galacturonosyl)m.. In terms of biological role, involved in maceration and soft-rotting of plant tissue. Hydrolyzes the 1,4-alpha glycosidic bonds of de-esterified pectate in the smooth region of the plant cell wall. The polypeptide is Probable endopolygalacturonase A (pgaA) (Neosartorya fischeri (strain ATCC 1020 / DSM 3700 / CBS 544.65 / FGSC A1164 / JCM 1740 / NRRL 181 / WB 181) (Aspergillus fischerianus)).